Consider the following 248-residue polypeptide: Exosome complex component Rrp41 (248 aa).

The protein belongs to the RNase PH family. Rrp41 subfamily. Component of the archaeal exosome complex. Forms a hexameric ring-like arrangement composed of 3 Rrp41-Rrp42 heterodimers. The hexameric ring associates with a trimer of Rrp4 and/or Csl4 subunits.

The protein localises to the cytoplasm. Catalytic component of the exosome, which is a complex involved in RNA degradation. Has 3'-&gt;5' exoribonuclease activity. Can also synthesize heteromeric RNA-tails. This is Exosome complex component Rrp41 from Thermoplasma acidophilum (strain ATCC 25905 / DSM 1728 / JCM 9062 / NBRC 15155 / AMRC-C165).